The sequence spans 298 residues: Nucleotide-binding protein MAV_3359 (298 aa).

Position 18-25 (18-25 (GLSGAGRG)) interacts with ATP. A GTP-binding site is contributed by 69–72 (DVRS).

It belongs to the RapZ-like family.

Its function is as follows. Displays ATPase and GTPase activities. This Mycobacterium avium (strain 104) protein is Nucleotide-binding protein MAV_3359.